A 464-amino-acid polypeptide reads, in one-letter code: MTEVKKGKINQILGPVVDVRFPSEWLPEINTALELNNHGSKLVLEVSQLVGDNIARCIAMDTTDGLVRGQEVINTEKPIMMPVGKQVLGRMFNVTGDPIDEQPAPTGKRMPIHRPAPSFAEQAEAIEILETGIKVVDLLVPFAKGGKIGLFGGAGVGKTVLMQELIHNIAKNHGGLSVFAGVGERTREGNDLYYEMAESDVLDKTALVFGQMNEPPGARMRVALSGLTMAEEFRDAFGQDVLLFIDNIFRFTQAGSEVSALLGRMPSAVGYQPTLAFEMGQLQERITSTKKGSITSVQAVYVPADDLTDPAPATTFSHLDAKVVLDRAIASLGLYPAISPLQSTSRLLDPLVVGVKHYSVARRVIEILQRFMELQDIIAILGMDELSEEDRQLVMRARKVRNYLSQPSHVAEKFSGQPGLSVKLEDTIEGFRKILDGECDDIHEQHFLYVGKIDDVFEKVAKSK.

Residue 152–159 coordinates ATP; sequence GGAGVGKT.

It belongs to the ATPase alpha/beta chains family. In terms of assembly, F-type ATPases have 2 components, CF(1) - the catalytic core - and CF(0) - the membrane proton channel. CF(1) has five subunits: alpha(3), beta(3), gamma(1), delta(1), epsilon(1). CF(0) has three main subunits: a(1), b(2) and c(9-12). The alpha and beta chains form an alternating ring which encloses part of the gamma chain. CF(1) is attached to CF(0) by a central stalk formed by the gamma and epsilon chains, while a peripheral stalk is formed by the delta and b chains.

It is found in the cell membrane. The catalysed reaction is ATP + H2O + 4 H(+)(in) = ADP + phosphate + 5 H(+)(out). Produces ATP from ADP in the presence of a proton gradient across the membrane. The catalytic sites are hosted primarily by the beta subunits. The polypeptide is ATP synthase subunit beta (Ureaplasma urealyticum serovar 10 (strain ATCC 33699 / Western)).